The primary structure comprises 125 residues: Acidic phospholipase A2 5 (125 aa).

Residue Ser-1 is a signal peptide. Positions 2 to 7 (NRPMPL) are excised as a propeptide. Disulfide bonds link Cys-18–Cys-77, Cys-33–Cys-124, Cys-35–Cys-50, Cys-37–Cys-54, Cys-49–Cys-105, Cys-56–Cys-98, Cys-66–Cys-91, and Cys-84–Cys-96. Phe-28 provides a ligand contact to N-acetyl-beta-D-glucosamine. Asp-30 contacts Zn(2+). Ca(2+)-binding residues include Tyr-34 and Gly-36. Positions 53 and 69 each coordinate N-acetyl-beta-D-glucosamine. The active site involves His-53. Glu-76 is a binding site for Zn(2+). Asp-99 is a catalytic residue. Asn-117 lines the Zn(2+) pocket.

As to quaternary structure, heterodimer formed between isoform 5 and isoform 6 in presence of zinc ion and monomer in absence of zinc ion. Ca(2+) serves as cofactor. Expressed by the venom gland.

The protein resides in the secreted. It carries out the reaction a 1,2-diacyl-sn-glycero-3-phosphocholine + H2O = a 1-acyl-sn-glycero-3-phosphocholine + a fatty acid + H(+). In terms of biological role, PLA2 catalyzes the calcium-dependent hydrolysis of the 2-acyl groups in 3-sn-phosphoglycerides. This is Acidic phospholipase A2 5 from Naja sagittifera (Andaman cobra).